We begin with the raw amino-acid sequence, 537 residues long: 2-succinyl-5-enolpyruvyl-6-hydroxy-3-cyclohexene-1-carboxylate synthase (537 aa).

Belongs to the TPP enzyme family. MenD subfamily. Homodimer. It depends on Mg(2+) as a cofactor. Mn(2+) serves as cofactor. Requires thiamine diphosphate as cofactor.

It carries out the reaction isochorismate + 2-oxoglutarate + H(+) = 5-enolpyruvoyl-6-hydroxy-2-succinyl-cyclohex-3-ene-1-carboxylate + CO2. It functions in the pathway quinol/quinone metabolism; 1,4-dihydroxy-2-naphthoate biosynthesis; 1,4-dihydroxy-2-naphthoate from chorismate: step 2/7. Its pathway is quinol/quinone metabolism; menaquinone biosynthesis. In terms of biological role, catalyzes the thiamine diphosphate-dependent decarboxylation of 2-oxoglutarate and the subsequent addition of the resulting succinic semialdehyde-thiamine pyrophosphate anion to isochorismate to yield 2-succinyl-5-enolpyruvyl-6-hydroxy-3-cyclohexene-1-carboxylate (SEPHCHC). The protein is 2-succinyl-5-enolpyruvyl-6-hydroxy-3-cyclohexene-1-carboxylate synthase of Desulfotalea psychrophila (strain LSv54 / DSM 12343).